Here is a 251-residue protein sequence, read N- to C-terminus: DNA repair protein RecO (251 aa).

This sequence belongs to the RecO family.

Functionally, involved in DNA repair and RecF pathway recombination. This chain is DNA repair protein RecO, found in Lactococcus lactis subsp. cremoris (strain MG1363).